Consider the following 107-residue polypeptide: Universal stress protein B homolog (107 aa).

The next 2 helical transmembrane spans lie at 6–25 (TILFALMLVTAINVARYVTA) and 89–106 (LFILSGSLLVLTTVVAFM).

The protein belongs to the universal stress protein B family.

It localises to the cell inner membrane. This Vibrio cholerae serotype O1 (strain ATCC 39541 / Classical Ogawa 395 / O395) protein is Universal stress protein B homolog.